Consider the following 240-residue polypeptide: Ribonuclease HII (240 aa).

Residues 27–226 (GPVAGVDEAG…GETRSLRLED (200 aa)) enclose the RNase H type-2 domain. Asp-33, Glu-34, and Asp-127 together coordinate a divalent metal cation.

Belongs to the RNase HII family. It depends on Mn(2+) as a cofactor. The cofactor is Mg(2+).

It localises to the cytoplasm. It catalyses the reaction Endonucleolytic cleavage to 5'-phosphomonoester.. Functionally, endonuclease that specifically degrades the RNA of RNA-DNA hybrids. The protein is Ribonuclease HII of Parafrankia sp. (strain EAN1pec).